The sequence spans 224 residues: UPF0758 protein Tola_0183 (224 aa).

An MPN domain is found at Ser-102 to Leu-224. Positions 173, 175, and 186 each coordinate Zn(2+). The JAMM motif signature appears at His-173–Asp-186.

This sequence belongs to the UPF0758 family.

In Tolumonas auensis (strain DSM 9187 / NBRC 110442 / TA 4), this protein is UPF0758 protein Tola_0183.